Reading from the N-terminus, the 413-residue chain is Serine/threonine transporter SstT (413 aa).

Transmembrane regions (helical) follow at residues Ile21–Gly41, Ser61–Gly81, Ile89–Phe109, Ile146–Ile166, Ile189–Leu209, Leu224–Phe244, Met305–Ile325, Leu337–Ile357, and Leu363–Val383.

This sequence belongs to the dicarboxylate/amino acid:cation symporter (DAACS) (TC 2.A.23) family.

It is found in the cell inner membrane. The catalysed reaction is L-serine(in) + Na(+)(in) = L-serine(out) + Na(+)(out). The enzyme catalyses L-threonine(in) + Na(+)(in) = L-threonine(out) + Na(+)(out). Involved in the import of serine and threonine into the cell, with the concomitant import of sodium (symport system). The chain is Serine/threonine transporter SstT from Mannheimia succiniciproducens (strain KCTC 0769BP / MBEL55E).